Here is a 286-residue protein sequence, read N- to C-terminus: Beta-lactamase SHV-2 (286 aa).

The signal sequence occupies residues M1–A21. S66 (acyl-ester intermediate) is an active-site residue. A disulfide bridge connects residues C73 and C119. E164 (proton acceptor) is an active-site residue. K230–G232 contributes to the substrate binding site.

The protein belongs to the class-A beta-lactamase family.

It carries out the reaction a beta-lactam + H2O = a substituted beta-amino acid. Its function is as follows. This enzyme hydrolyzes cefotaxime, ceftazidime and other broad spectrum cephalosporins. In Escherichia coli, this protein is Beta-lactamase SHV-2 (bla).